The sequence spans 354 residues: Phospho-N-acetylmuramoyl-pentapeptide-transferase (354 aa).

A run of 10 helical transmembrane segments spans residues 16–36, 66–86, 88–108, 130–150, 168–188, 193–213, 227–247, 257–277, 282–302, and 331–351; these read YITV…LYLM, TPTM…LLTV, IHNP…AIGV, FFLQ…YAHL, IFGI…VNLT, GLAT…TYIT, IIGV…LIGF, VFMG…MAII, VLLI…IIQV, and KIIV…LITL.

The protein belongs to the glycosyltransferase 4 family. MraY subfamily. It depends on Mg(2+) as a cofactor.

The protein resides in the cell inner membrane. It catalyses the reaction UDP-N-acetyl-alpha-D-muramoyl-L-alanyl-gamma-D-glutamyl-meso-2,6-diaminopimeloyl-D-alanyl-D-alanine + di-trans,octa-cis-undecaprenyl phosphate = di-trans,octa-cis-undecaprenyl diphospho-N-acetyl-alpha-D-muramoyl-L-alanyl-D-glutamyl-meso-2,6-diaminopimeloyl-D-alanyl-D-alanine + UMP. It functions in the pathway cell wall biogenesis; peptidoglycan biosynthesis. Its function is as follows. Catalyzes the initial step of the lipid cycle reactions in the biosynthesis of the cell wall peptidoglycan: transfers peptidoglycan precursor phospho-MurNAc-pentapeptide from UDP-MurNAc-pentapeptide onto the lipid carrier undecaprenyl phosphate, yielding undecaprenyl-pyrophosphoryl-MurNAc-pentapeptide, known as lipid I. This is Phospho-N-acetylmuramoyl-pentapeptide-transferase from Nitratiruptor sp. (strain SB155-2).